Here is a 190-residue protein sequence, read N- to C-terminus: Protein hunchback (190 aa).

3 disordered regions span residues 13 to 59 (EPMS…SSNL), 86 to 110 (AAMT…PNPM), and 142 to 190 (QTND…KYMA). Basic residues predominate over residues 17-31 (HHHHHSHHHGHHHML). A compositionally biased stretch (polar residues) spans 90–100 (PSPSNNDQNSP). Basic and acidic residues predominate over residues 171–190 (EPEKDHDLISNSSEDMKYMA).

Belongs to the hunchback C2H2-type zinc-finger protein family.

The protein localises to the nucleus. Its function is as follows. Gap class segmentation protein that controls development of head structures. The sequence is that of Protein hunchback (hb) from Scaptomyza crassifemur (Fruit fly).